Here is a 153-residue protein sequence, read N- to C-terminus: 3-hydroxyacyl-[acyl-carrier-protein] dehydratase FabZ (153 aa).

His54 is a catalytic residue.

The protein belongs to the thioester dehydratase family. FabZ subfamily.

The protein resides in the cytoplasm. It catalyses the reaction a (3R)-hydroxyacyl-[ACP] = a (2E)-enoyl-[ACP] + H2O. Involved in unsaturated fatty acids biosynthesis. Catalyzes the dehydration of short chain beta-hydroxyacyl-ACPs and long chain saturated and unsaturated beta-hydroxyacyl-ACPs. This Chlamydia muridarum (strain MoPn / Nigg) protein is 3-hydroxyacyl-[acyl-carrier-protein] dehydratase FabZ.